Here is a 328-residue protein sequence, read N- to C-terminus: 4-hydroxy-3-methylbut-2-enyl diphosphate reductase (328 aa).

Residue Cys-24 coordinates [4Fe-4S] cluster. Positions 55 and 88 each coordinate (2E)-4-hydroxy-3-methylbut-2-enyl diphosphate. The dimethylallyl diphosphate site is built by His-55 and His-88. Residues His-55 and His-88 each coordinate isopentenyl diphosphate. Cys-110 lines the [4Fe-4S] cluster pocket. His-138 serves as a coordination point for (2E)-4-hydroxy-3-methylbut-2-enyl diphosphate. His-138 is a dimethylallyl diphosphate binding site. His-138 provides a ligand contact to isopentenyl diphosphate. The active-site Proton donor is the Glu-140. Thr-178 serves as a coordination point for (2E)-4-hydroxy-3-methylbut-2-enyl diphosphate. Cys-208 contributes to the [4Fe-4S] cluster binding site. (2E)-4-hydroxy-3-methylbut-2-enyl diphosphate contacts are provided by Ser-236, Ser-237, Asn-238, and Ser-279. Residues Ser-236, Ser-237, Asn-238, and Ser-279 each contribute to the dimethylallyl diphosphate site. Positions 236, 237, 238, and 279 each coordinate isopentenyl diphosphate.

It belongs to the IspH family. [4Fe-4S] cluster serves as cofactor.

The enzyme catalyses isopentenyl diphosphate + 2 oxidized [2Fe-2S]-[ferredoxin] + H2O = (2E)-4-hydroxy-3-methylbut-2-enyl diphosphate + 2 reduced [2Fe-2S]-[ferredoxin] + 2 H(+). It carries out the reaction dimethylallyl diphosphate + 2 oxidized [2Fe-2S]-[ferredoxin] + H2O = (2E)-4-hydroxy-3-methylbut-2-enyl diphosphate + 2 reduced [2Fe-2S]-[ferredoxin] + 2 H(+). It functions in the pathway isoprenoid biosynthesis; dimethylallyl diphosphate biosynthesis; dimethylallyl diphosphate from (2E)-4-hydroxy-3-methylbutenyl diphosphate: step 1/1. The protein operates within isoprenoid biosynthesis; isopentenyl diphosphate biosynthesis via DXP pathway; isopentenyl diphosphate from 1-deoxy-D-xylulose 5-phosphate: step 6/6. Functionally, catalyzes the conversion of 1-hydroxy-2-methyl-2-(E)-butenyl 4-diphosphate (HMBPP) into a mixture of isopentenyl diphosphate (IPP) and dimethylallyl diphosphate (DMAPP). Acts in the terminal step of the DOXP/MEP pathway for isoprenoid precursor biosynthesis. In Ehrlichia ruminantium (strain Welgevonden), this protein is 4-hydroxy-3-methylbut-2-enyl diphosphate reductase.